Reading from the N-terminus, the 407-residue chain is Multifunctional CCA protein (407 aa).

ATP-binding residues include G8 and R11. CTP contacts are provided by G8 and R11. Mg(2+)-binding residues include D21 and D23. Residues R91, R137, and R140 each contribute to the ATP site. Residues R91, R137, and R140 each coordinate CTP. An HD domain is found at 228–329 (TGMHTLMVSQ…IKIFDKMDLW (102 aa)).

Belongs to the tRNA nucleotidyltransferase/poly(A) polymerase family. Bacterial CCA-adding enzyme type 1 subfamily. In terms of assembly, monomer. Can also form homodimers and oligomers. The cofactor is Mg(2+). Requires Ni(2+) as cofactor.

The enzyme catalyses a tRNA precursor + 2 CTP + ATP = a tRNA with a 3' CCA end + 3 diphosphate. It catalyses the reaction a tRNA with a 3' CCA end + 2 CTP + ATP = a tRNA with a 3' CCACCA end + 3 diphosphate. Functionally, catalyzes the addition and repair of the essential 3'-terminal CCA sequence in tRNAs without using a nucleic acid template. Adds these three nucleotides in the order of C, C, and A to the tRNA nucleotide-73, using CTP and ATP as substrates and producing inorganic pyrophosphate. tRNA 3'-terminal CCA addition is required both for tRNA processing and repair. Also involved in tRNA surveillance by mediating tandem CCA addition to generate a CCACCA at the 3' terminus of unstable tRNAs. While stable tRNAs receive only 3'-terminal CCA, unstable tRNAs are marked with CCACCA and rapidly degraded. This is Multifunctional CCA protein from Aliivibrio salmonicida (strain LFI1238) (Vibrio salmonicida (strain LFI1238)).